The chain runs to 290 residues: Phosphonopyruvate hydrolase (290 aa).

Residue 40-44 coordinates substrate; the sequence is WGSGF. The active-site Nucleophile is the Asp54. Mg(2+) is bound at residue Asp81. Residues Arg155, His186, and Arg188 each contribute to the substrate site.

Homodimer. Homotetramer. Co(2+) serves as cofactor. It depends on Mg(2+) as a cofactor. The cofactor is Mn(2+).

The catalysed reaction is 3-phosphonopyruvate + H2O = pyruvate + phosphate + H(+). With respect to regulation, partially inhibited by EDTA. Activity is restored by Co(2+), and to a lesser extent by Ni(2+) and Mg(2+). Unaffected by Cs(2+) and Ca(2+). Activity is reduced by Mn(2+) and Cu(2+). In terms of biological role, hydrolyzes phosphonopyruvate. Not active towards phosphoenolpyruvate, glycerophosphate, phospho-L-serine or phosphoglycolic acid. This is Phosphonopyruvate hydrolase from Variovorax sp. (strain Pal2).